Consider the following 122-residue polypeptide: Large ribosomal subunit protein uL14 (122 aa).

The protein belongs to the universal ribosomal protein uL14 family. As to quaternary structure, part of the 50S ribosomal subunit. Forms a cluster with proteins L3 and L19. In the 70S ribosome, L14 and L19 interact and together make contacts with the 16S rRNA in bridges B5 and B8.

Its function is as follows. Binds to 23S rRNA. Forms part of two intersubunit bridges in the 70S ribosome. This chain is Large ribosomal subunit protein uL14, found in Buchnera aphidicola subsp. Acyrthosiphon pisum (strain 5A).